A 107-amino-acid polypeptide reads, in one-letter code: U1-lycotoxin-Ls1s (107 aa).

The first 20 residues, methionine 1–serine 20, serve as a signal peptide directing secretion. Residues glutamate 21–arginine 41 constitute a propeptide that is removed on maturation. Intrachain disulfides connect cysteine 44–cysteine 59, cysteine 51–cysteine 68, cysteine 58–cysteine 86, and cysteine 70–cysteine 84.

This sequence belongs to the neurotoxin 19 (CSTX) family. 04 (U1-Lctx) subfamily. In terms of tissue distribution, expressed by the venom gland.

The protein localises to the secreted. The polypeptide is U1-lycotoxin-Ls1s (Lycosa singoriensis (Wolf spider)).